The primary structure comprises 1530 residues: Multidrug resistance-associated protein 1 (1530 aa).

Residues 1–33 (MALRDFCSVDGSDLFWEWNVTWNTSNPDFTKCF) are Extracellular-facing. Residue N19 is glycosylated (N-linked (GlcNAc...) asparagine). A helical membrane pass occupies residues 34–54 (QNTVLVWVPCSYLWVCFPFYF). The Cytoplasmic segment spans residues 55–74 (LYLSHHDRGYIQMTHLNKAK). Residues 75–95 (TALGFLLWIVCWADLFYSFWE) form a helical membrane-spanning segment. The Extracellular portion of the chain corresponds to 96 to 100 (RSMGK). A helical membrane pass occupies residues 101–121 (LLAPVFLVSPTLLGITMLLAT). Over 122 to 133 (FLIQIERRRGVQ) the chain is Cytoplasmic. Residues 134 to 154 (SSGIMLTFWLIALLCALAILR) form a helical membrane-spanning segment. The Extracellular portion of the chain corresponds to 155–172 (SKIMTALKEDARVDVFRD). A helical membrane pass occupies residues 173–193 (VTFYIYFSLVLIQLVLSCFSD). Over 194–316 (RSPLFSETIN…KERDPSLFKV (123 aa)) the chain is Cytoplasmic. Phosphotyrosine is present on Y277. S289 is modified (phosphoserine). The chain crosses the membrane as a helical span at residues 317–337 (LYKTFGPYFLMSFLFKAVHDL). Residues 325–608 (FLMSFLFKAV…LPMVISSIVQ (284 aa)) form the ABC transmembrane type-1 1 domain. Residues 338-363 (MMFAGPEILKLLINFVNDKKAPEWQG) lie on the Extracellular side of the membrane. A helical transmembrane segment spans residues 364 to 384 (YFYTALLFISACLQTLVLHQY). At 385–440 (FHICFVSGMRIKTAVIGAVYRKALVITNAARKSSTVGEIVNLMSVDAQRFMDLATY) the chain is on the cytoplasmic side. Residues 441–461 (INMIWSAPLQVILALYLLWLN) form a helical membrane-spanning segment. The Extracellular portion of the chain corresponds to 462–464 (LGP). A helical membrane pass occupies residues 465 to 485 (SVLAGVAVMVLMVPLNAVMAM). The Cytoplasmic portion of the chain corresponds to 486–547 (KTKTYQVAHM…VLKKSAYLAA (62 aa)). K503 carries the post-translational modification N6-succinyllysine. The helical transmembrane segment at 548 to 568 (VGTFTWVCTPFLVALSTFAVY) threads the bilayer. Over 569-590 (VTVDENNILDAQKAFVSLALFN) the chain is Extracellular. Residues 591-611 (ILRFPLNILPMVISSIVQASV) form a helical membrane-spanning segment. Topologically, residues 612-966 (SLKRLRVFLS…VKLSVYWDYM (355 aa)) are cytoplasmic. Positions 644-868 (ITVKNATFTW…DGAFAEFLRT (225 aa)) constitute an ABC transporter 1 domain. 678–685 (GQVGCGKS) serves as a coordination point for ATP. Positions 912–939 (RQLSSSSSYSRDVSQHHTSTAELRKPGP) are disordered. S915 and S930 each carry phosphoserine. The helical transmembrane segment at 967 to 987 (KAIGLFISFLSIFLFLCNHVA) threads the bilayer. The ABC transmembrane type-1 2 domain maps to 974 to 1255 (SFLSIFLFLC…LVRMSSEMET (282 aa)). The Extracellular portion of the chain corresponds to 988-1024 (SLVSNYWLSLWTDDPIVNGTQEHTQVRLSVYGALGIS). N1005 carries N-linked (GlcNAc...) asparagine glycosylation. Residues 1025–1045 (QGITVFGYSMAVSIGGIFASR) traverse the membrane as a helical segment. The Cytoplasmic segment spans residues 1046 to 1088 (RLHLDLLHNVLRSPISFFERTPSGNLVNRFSKELDTVDSMIPQ). The chain crosses the membrane as a helical span at residues 1089–1109 (VIKMFMGSLFNVIGACIIILL). Residue A1110 is a topological domain, extracellular. Residues 1111–1131 (TPMAAVIIPPLGLIYFFVQRF) form a helical membrane-spanning segment. Topologically, residues 1132 to 1202 (YVASSRQLKR…VANRWLAVRL (71 aa)) are cytoplasmic. The chain crosses the membrane as a helical span at residues 1203-1223 (ECVGNCIVLFASLFAVISRHS). Residues 1224 to 1225 (LS) lie on the Extracellular side of the membrane. Residues 1226–1246 (AGLVGLSVSYSLQVTTYLNWL) form a helical membrane-spanning segment. Over 1247 to 1530 (VRMSSEMETN…YSMAKDSGLV (284 aa)) the chain is Cytoplasmic. One can recognise an ABC transporter 2 domain in the interval 1292 to 1526 (VEFRDYGLRY…RGLFYSMAKD (235 aa)). 1326–1333 (GRTGAGKS) contacts ATP.

This sequence belongs to the ABC transporter superfamily. ABCC family. Conjugate transporter (TC 3.A.1.208) subfamily. As to expression, expressed in heart, spleen, lung, kidney, skeletal muscle, mammary gland and weaker in brain and liver.

It localises to the cell membrane. Its subcellular location is the basolateral cell membrane. It carries out the reaction ATP + H2O + xenobioticSide 1 = ADP + phosphate + xenobioticSide 2.. It catalyses the reaction an S-substituted glutathione(in) + ATP + H2O = an S-substituted glutathione(out) + ADP + phosphate + H(+). The catalysed reaction is sphing-4-enine 1-phosphate(in) + ATP + H2O = sphing-4-enine 1-phosphate(out) + ADP + phosphate + H(+). The enzyme catalyses leukotriene C4(in) + ATP + H2O = leukotriene C4(out) + ADP + phosphate + H(+). It carries out the reaction 17beta-estradiol 17-O-(beta-D-glucuronate)(in) + ATP + H2O = 17beta-estradiol 17-O-(beta-D-glucuronate)(out) + ADP + phosphate + H(+). It catalyses the reaction daunorubicin(in) + ATP + H2O = daunorubicin(out) + ADP + phosphate + H(+). The catalysed reaction is vincristine(in) + ATP + H2O = vincristine(out) + ADP + phosphate + H(+). The enzyme catalyses 2',3'-cGAMP(in) + ATP + H2O = 2',3'-cGAMP(out) + ADP + phosphate + H(+). It carries out the reaction S-[(2E,6E,10E)-geranylgeranyl]-L-glutathione(in) + ATP + H2O = S-[(2E,6E,10E)-geranylgeranyl]-L-glutathione(out) + ADP + phosphate + H(+). It catalyses the reaction prostaglandin A2-S-(R)-glutathione(in) + ATP + H2O = prostaglandin A2-S-(R)-glutathione(out) + ADP + phosphate + H(+). The catalysed reaction is prostaglandin A2-S-(S)-glutathione(in) + ATP + H2O = prostaglandin A2-S-(S)-glutathione(out) + ADP + phosphate + H(+). Its activity is regulated as follows. MK 571 inhibits sphingosine 1-phosphate and leukotriene C4 export. Functionally, mediates export of organic anions and drugs from the cytoplasm. Mediates ATP-dependent transport of glutathione and glutathione conjugates, leukotriene C4, estradiol-17-beta-o-glucuronide, methotrexate, antiviral drugs and other xenobiotics. Confers resistance to anticancer drugs by decreasing accumulation of drug in cells, and by mediating ATP- and GSH-dependent drug export. Hydrolyzes ATP with low efficiency. Catalyzes the export of sphingosine 1-phosphate from mast cells independently of their degranulation. Participates in inflammatory response by allowing export of leukotriene C4 from leukotriene C4-synthesizing cells. Mediates ATP-dependent, GSH-independent cyclic GMP-AMP (cGAMP) export. Thus, by limiting intracellular cGAMP concentrations negatively regulates the cGAS-STING pathway. Exports S-geranylgeranyl-glutathione (GGG) in lymphoid cells and stromal compartments of lymphoid organs. ABCC1 (via extracellular transport) with GGT5 (via GGG catabolism) establish GGG gradients within lymphoid tissues to position P2RY8-positive lymphocytes at germinal centers in lymphoid follicles and restrict their chemotactic transmigration from blood vessels to the bone marrow parenchyma. Mediates basolateral export of GSH-conjugated R- and S-prostaglandin A2 diastereomers in polarized epithelial cells. The sequence is that of Multidrug resistance-associated protein 1 from Bos taurus (Bovine).